The chain runs to 248 residues: Tetrachloro-P-hydroquinone reductive dehalogenase (248 aa).

In terms of domain architecture, GST N-terminal spans 2 to 84; that stretch reads PEVSLYNYTM…EAAKLGKVGI (83 aa). Positions 133-248 constitute a GST C-terminal domain; that stretch reads YAEKYPELRS…RVMPNWKGGI (116 aa).

Belongs to the GST superfamily. In terms of assembly, homodimer.

It catalyses the reaction 2,6-dichlorohydroquinone + glutathione disulfide + chloride + H(+) = 2,3,6-trichlorohydroquinone + 2 glutathione. It carries out the reaction 2,3,6-trichlorohydroquinone + glutathione disulfide + chloride = 2,3,5,6-tetrachlorohydroquinone + 2 glutathione. It functions in the pathway xenobiotic degradation; pentachlorophenol degradation. Functionally, sequential reduction of tetrachloro-p-hydroquinone to monochlorophenol, using glutathione as the reducing agent. The protein is Tetrachloro-P-hydroquinone reductive dehalogenase (pcpC) of Sphingobium chlorophenolicum.